The chain runs to 67 residues: Medusin-PT (67 aa).

A signal peptide spans 1-22 (MAFLKKSLFLVFFLGFVSLSIC). The propeptide occupies 23–48 (EEEKRETDEKENEQEDDREERSEEKR). The tract at residues 25–46 (EKRETDEKENEQEDDREERSEE) is disordered. Residues 31-40 (EKENEQEDDR) are compositionally biased toward acidic residues. The residue at position 66 (leucine 66) is a Leucine amide.

This sequence belongs to the frog skin active peptide (FSAP) family. Medusin subfamily. In the synthetic mutant medusin-PT1a [T58K], the Leu-50 has been modified in a D-amino acid. In medusin-PT1a, there is an increase in antimicrobial activity, and an increase in hemolytic activity. It is more potent against S.aureus and gains activity against MRSA, E.faecalis, E.coli, P.aeruginosa and C.albicans. There is an important increase in both biofilm inhibition and biofilm eradication. In terms of tissue distribution, expressed by the skin glands.

It localises to the secreted. The protein resides in the target cell membrane. Functionally, antimicrobial peptide with activity against Gram-positive bacteria S.epidermidis ATCC 12228 (MIC=50 uM) and S.aureus (MIC=64 ug/ml and MBC=128 ug/ml). Not active against some Gram-positive bacteria (methicillin-resistant S.aureus (MRSA), E.faecalis), Gram-negative bacterium E.coli ATCC 25922 and fungus C.albicans at concentrations up to 100 uM. Can only slightly inhibit the formation of biofilm by S.aureus (minimal biofilm inhibitionconcentration MBIC=512 ug/ml, minimal biofilm eradication concentration MBEC&gt;512 ug/ml). Has an anti-inflammatory effect, since it inhibits the production of the pro-inflammatory cytokines TNF-alpha and IL-1beta. Has high activity of stimulation of insulin release, which may protect the species from being eaten by predators by causing fatal hypoglycemia. Is not cytotoxic to cancer line cells. Shows very low hemolysis on horse erythrocytes and moderate hemolysis on mouse erythrocytes. This Phyllomedusa tarsius (Brownbelly leaf frog) protein is Medusin-PT.